Consider the following 95-residue polypeptide: Cytochrome b-c1 complex subunit 8, mitochondrial (95 aa).

The helical transmembrane segment at 57–74 threads the bilayer; the sequence is FLYVAIPFVVVWSIWTRA.

This sequence belongs to the UQCRQ/QCR8 family. In terms of assembly, component of the ubiquinol-cytochrome c oxidoreductase (cytochrome b-c1 complex, complex III, CIII), a multisubunit enzyme composed of 10 subunits. The complex is composed of 3 respiratory subunits cytochrome b (COB), cytochrome c1 (CYT1) and Rieske protein (RIP1), 2 core protein subunits COR1 and QCR2, and 5 low-molecular weight protein subunits QCR6, QCR7, QCR8, QCR9 and QCR10. The complex exists as an obligatory dimer and forms supercomplexes (SCs) in the inner mitochondrial membrane with a monomer or a dimer of cytochrome c oxidase (complex IV, CIV), resulting in 2 different assemblies (supercomplexes III(2)IV and III(2)IV(2)).

The protein localises to the membrane. It localises to the mitochondrion inner membrane. Functionally, component of the ubiquinol-cytochrome c oxidoreductase, a multisubunit transmembrane complex that is part of the mitochondrial electron transport chain which drives oxidative phosphorylation. The complex plays an important role in the uptake of multiple carbon sources present in different host niches. The polypeptide is Cytochrome b-c1 complex subunit 8, mitochondrial (Candida albicans (strain SC5314 / ATCC MYA-2876) (Yeast)).